A 329-amino-acid chain; its full sequence is Beta-ketoacyl-[acyl-carrier-protein] synthase III (329 aa).

Residues Cys112 and His253 contribute to the active site. Residues 254 to 258 (QANQR) are ACP-binding. Asn283 is a catalytic residue.

The protein belongs to the thiolase-like superfamily. FabH family. In terms of assembly, homodimer.

Its subcellular location is the cytoplasm. The enzyme catalyses malonyl-[ACP] + acetyl-CoA + H(+) = 3-oxobutanoyl-[ACP] + CO2 + CoA. It participates in lipid metabolism; fatty acid biosynthesis. Functionally, catalyzes the condensation reaction of fatty acid synthesis by the addition to an acyl acceptor of two carbons from malonyl-ACP. Catalyzes the first condensation reaction which initiates fatty acid synthesis and may therefore play a role in governing the total rate of fatty acid production. Possesses both acetoacetyl-ACP synthase and acetyl transacylase activities. Its substrate specificity determines the biosynthesis of branched-chain and/or straight-chain of fatty acids. The sequence is that of Beta-ketoacyl-[acyl-carrier-protein] synthase III from Gloeobacter violaceus (strain ATCC 29082 / PCC 7421).